The chain runs to 279 residues: MRLGAHLSIAKGLPRTAAMATSIGANTFQYFTRNPRGGAARQIPGKEIQAWREARRRADLYPIAGHLPYTVNLGAAAERQQEFTRMVLHDDTLRVAAIDGEYLISHPGHYEGERQAGLDRIIQLIEEAYLSITPPGPMLLLETMAGQGKEVGTIDDLCYILEGLGWPDRVGVCLDSAHLFAAGWDLRTPAGCQQLVQELAAKIGLDRVKAMHLNDSAAPLGSHRDRHAGIGKGELGREGIAAVVNDPFLGELPLFLETPVANYEEYGEEIALIQKLKSV.

Residues H66, H106, E142, D175, H178, H212, D225, H227, and E257 each coordinate Zn(2+).

The protein belongs to the AP endonuclease 2 family. The cofactor is Zn(2+).

It catalyses the reaction Endonucleolytic cleavage to 5'-phosphooligonucleotide end-products.. In terms of biological role, endonuclease IV plays a role in DNA repair. It cleaves phosphodiester bonds at apurinic or apyrimidinic (AP) sites, generating a 3'-hydroxyl group and a 5'-terminal sugar phosphate. In Moorella thermoacetica (strain ATCC 39073 / JCM 9320), this protein is Probable endonuclease 4.